Consider the following 262-residue polypeptide: Nodulation protein J (262 aa).

Residues 33 to 259 enclose the ABC transmembrane type-2 domain; that stretch reads ASLLGNLADP…FASIALFRRR (227 aa). A run of 7 helical transmembrane segments spans residues 37 to 57, 64 to 84, 102 to 122, 125 to 145, 149 to 169, 177 to 197, and 236 to 256; these read GNLA…GLIV, SYIA…SATF, GILF…VWAA, SVLA…ASWT, CAIP…MVVI, YFVF…GAVF, and LHVG…IALF.

The protein belongs to the ABC-2 integral membrane protein family. Lipooligosaccharide exporter (TC 3.A.1.102) subfamily. In terms of assembly, the complex is composed of two ATP-binding proteins (NodI) and two transmembrane proteins (NodJ).

Its subcellular location is the cell inner membrane. Its function is as follows. Part of the ABC transporter complex NodIJ involved in the export of the nodulation factors (Nod factors), the bacterial signal molecules that induce symbiosis and subsequent nodulation induction. Nod factors are LCO (lipo-chitin oligosaccharide), a modified beta-1,4-linked N-acetylglucosamine oligosaccharide. This subunit encodes the transporter. This chain is Nodulation protein J (nodJ), found in Bradyrhizobium diazoefficiens (strain JCM 10833 / BCRC 13528 / IAM 13628 / NBRC 14792 / USDA 110).